The chain runs to 658 residues: NUAK family SNF1-like kinase 1 (658 aa).

Residue Met-1 is modified to N-acetylmethionine. The segment at 1 to 53 (MEGAAVSAAGDGPAVETGLPGSPLEAVAGATAAPVEPRKPHGVKRHHHKHNLK) is disordered. Phosphoserine is present on Ser-22. Positions 40–53 (PHGVKRHHHKHNLK) are enriched in basic residues. Positions 56–307 (YELQETLGKG…IEDIANHWWV (252 aa)) constitute a Protein kinase domain. Residues 62–70 (LGKGTYGKV) and Lys-85 each bind ATP. Catalysis depends on Asp-179, which acts as the Proton acceptor. Thr-212 bears the Phosphothreonine; by LKB1 mark. Disordered regions lie at residues 353-422 (LAKP…EGIV) and 441-568 (IPLP…SYSR). The span at 378–393 (FPQSGQDSVPESPSKL) shows a compositional bias: polar residues. Residues 394-405 (SSKRPKGILKKR) are compositionally biased toward basic residues. Residues 400 to 403 (GILK) carry the GILK motif motif. Residue Ser-456 is modified to Phosphoserine. The span at 519–530 (SCRRKGILKHSS) shows a compositional bias: basic residues. Positions 559-568 (SDGISRSYSR) are enriched in low complexity. Residue Ser-601 is modified to Phosphoserine; by PKB/AKT1.

This sequence belongs to the protein kinase superfamily. CAMK Ser/Thr protein kinase family. SNF1 subfamily. In terms of assembly, interacts (via GILK motif) with PPP1CB; the interaction is direct and bridges NUAK1 and PPP1R12A. Interacts with CDKN1A. Mg(2+) is required as a cofactor. In terms of processing, phosphorylated at Thr-212 by STK11/LKB1 in complex with STE20-related adapter-alpha (STRADA) pseudo kinase and CAB39. Not dephosphorylated by the myosin PP1 complex when regulating its activity, due to the presence of PPP1R12A, which prevents myosin PP1 from dephosphorylating NUAK1. Phosphorylated by STK38L upon stimulation with IGF1. Ubiquitinated with 'Lys-29'- and 'Lys-33'-linked polyubiquitins which appear to impede LKB1-mediated phosphorylation. Deubiquitinated by USP9X. Expressed in the developing central nervous system, in epidermis, and some other tissues.

It is found in the nucleus. The protein resides in the cytoplasm. It catalyses the reaction L-seryl-[protein] + ATP = O-phospho-L-seryl-[protein] + ADP + H(+). The enzyme catalyses L-threonyl-[protein] + ATP = O-phospho-L-threonyl-[protein] + ADP + H(+). With respect to regulation, activated by phosphorylation on Thr-212. Activated by phosphorylation at Ser-601 AKT1 during glucose starvation; the relevance of such activation in normal cells is however unsure. Its function is as follows. Serine/threonine-protein kinase involved in various processes such as cell adhesion, regulation of cell ploidy and senescence, cell proliferation and tumor progression. Phosphorylates ATM, CASP6, LATS1, PPP1R12A and p53/TP53. Acts as a regulator of cellular senescence and cellular ploidy by mediating phosphorylation of 'Ser-464' of LATS1, thereby controlling its stability. Controls cell adhesion by regulating activity of the myosin protein phosphatase 1 (PP1) complex. Acts by mediating phosphorylation of PPP1R12A subunit of myosin PP1: phosphorylated PPP1R12A then interacts with 14-3-3, leading to reduced dephosphorylation of myosin MLC2 by myosin PP1. May be involved in DNA damage response: phosphorylates p53/TP53 at 'Ser-15' and 'Ser-392' and is recruited to the CDKN1A/WAF1 promoter to participate in transcription activation by p53/TP53. May also act as a tumor malignancy-associated factor by promoting tumor invasion and metastasis under regulation and phosphorylation by AKT1. Suppresses Fas-induced apoptosis by mediating phosphorylation of CASP6, thereby suppressing the activation of the caspase and the subsequent cleavage of CFLAR. Regulates UV radiation-induced DNA damage response mediated by CDKN1A. In association with STK11, phosphorylates CDKN1A in response to UV radiation and contributes to its degradation which is necessary for optimal DNA repair. This is NUAK family SNF1-like kinase 1 (Nuak1) from Mus musculus (Mouse).